A 221-amino-acid chain; its full sequence is Ribosomal RNA large subunit methyltransferase E (221 aa).

5 residues coordinate S-adenosyl-L-methionine: glycine 72, tryptophan 74, aspartate 91, aspartate 107, and aspartate 131. The Proton acceptor role is filled by lysine 171.

Belongs to the class I-like SAM-binding methyltransferase superfamily. RNA methyltransferase RlmE family.

The protein localises to the cytoplasm. It catalyses the reaction uridine(2552) in 23S rRNA + S-adenosyl-L-methionine = 2'-O-methyluridine(2552) in 23S rRNA + S-adenosyl-L-homocysteine + H(+). In terms of biological role, specifically methylates the uridine in position 2552 of 23S rRNA at the 2'-O position of the ribose in the fully assembled 50S ribosomal subunit. The polypeptide is Ribosomal RNA large subunit methyltransferase E (Zymomonas mobilis subsp. mobilis (strain ATCC 31821 / ZM4 / CP4)).